The sequence spans 101 residues: Ubiquitin-related modifier 1 (101 aa).

G101 is modified (1-thioglycine). G101 participates in a covalent cross-link: Glycyl lysine isopeptide (Gly-Lys) (interchain with K-? in acceptor proteins).

It belongs to the URM1 family. In terms of processing, C-terminal thiocarboxylation occurs in 2 steps, it is first acyl-adenylated (-COAMP) via the hesA/moeB/thiF part of the MOCS3 homolog, then thiocarboxylated (-COSH) via the rhodanese domain of the MOCS3 homolog.

It is found in the cytoplasm. It participates in tRNA modification; 5-methoxycarbonylmethyl-2-thiouridine-tRNA biosynthesis. Acts as a sulfur carrier required for 2-thiolation of mcm(5)S(2)U at tRNA wobble positions of cytosolic tRNA(Lys), tRNA(Glu) and tRNA(Gln). Serves as sulfur donor in tRNA 2-thiolation reaction by being thiocarboxylated (-COSH) at its C-terminus by MOCS3. The sulfur is then transferred to tRNA to form 2-thiolation of mcm(5)S(2)U. Also acts as a ubiquitin-like protein (UBL) that is covalently conjugated via an isopeptide bond to lysine residues of target proteins. The thiocarboxylated form serves as substrate for conjugation and oxidative stress specifically induces the formation of UBL-protein conjugates. The polypeptide is Ubiquitin-related modifier 1 (Gallus gallus (Chicken)).